We begin with the raw amino-acid sequence, 311 residues long: Aquaporin Lacbi1:392091 (311 aa).

Residues 1-16 lie on the Cytoplasmic side of the membrane; the sequence is MHPQVASLFDNVYEDL. The helical transmembrane segment at 17–37 threads the bilayer; the sequence is AAATLEFIGTAFFLLFGLGGI. The Extracellular portion of the chain corresponds to 38-56; the sequence is QASTAEDTASGQPPASGIE. Residues 57-77 traverse the membrane as a helical segment; the sequence is HVLYISTCMGLSLVVSAWLFF. Arg-78 is a topological domain (cytoplasmic). Residues 79-99 form a helical membrane-spanning segment; that stretch reads VTGGLFNPNISFALLLVGGLK. The short motif at 85–87 is the NPA 1 element; the sequence is NPN. Residue Pro-100 is a topological domain, extracellular. A helical membrane pass occupies residues 101–121; the sequence is LRFVLFCIAQLTGAIAGAAIV. The Cytoplasmic segment spans residues 122-143; it reads RGLTSAPLSVNNVLQQGTSAAQ. The chain crosses the membrane as a helical span at residues 144 to 164; it reads GVFIEMFITAALVLSVLMLAA. The Extracellular segment spans residues 165–168; it reads EKHE. Residues 169 to 189 traverse the membrane as a helical segment; the sequence is ATPFAPVGIGLTLFACHLFAV. Over 190 to 215 the chain is Cytoplasmic; it reads YYTGAAMNSARAFGPAVISGFPEPQH. An NPA 2 motif is present at residues 197–199; sequence NSA. Residues 216–236 form a helical membrane-spanning segment; sequence WVYWVGPFLGSLLGAGFYATL. At 237–311 the chain is on the extracellular side; it reads KHYKYWHLNP…TSSRTNFSPV (75 aa). Residues 276–311 are disordered; the sequence is DEETRNGCASNEEGVRATGDEKSSNATSSRTNFSPV. The segment covering 288 to 298 has biased composition (basic and acidic residues); that stretch reads EGVRATGDEKS. The span at 299–311 shows a compositional bias: polar residues; the sequence is SNATSSRTNFSPV. The N-linked (GlcNAc...) asparagine glycan is linked to Asn-300.

This sequence belongs to the MIP/aquaporin (TC 1.A.8) family.

The protein resides in the membrane. The enzyme catalyses H2O(in) = H2O(out). The catalysed reaction is NH4(+)(in) = NH4(+)(out). In terms of biological role, water channel required to facilitate the transport of water across membranes. Also enables low but statistically significant ammonium permeability. May be involved in fungal nitrogen (ammonium) support of the plant host in symbiosis. The sequence is that of Aquaporin Lacbi1:392091 from Laccaria bicolor (strain S238N-H82 / ATCC MYA-4686) (Bicoloured deceiver).